A 596-amino-acid polypeptide reads, in one-letter code: Actin-histidine N-methyltransferase (596 aa).

Positions 1 to 22 (MGKKSRVKTQKSGTGATATVSP) are disordered. Positions 10 to 20 (QKSGTGATATV) are enriched in polar residues. Residues R75, 104 to 106 (EGF), R254, 275 to 279 (DMCNH), and 325 to 327 (SGF) each bind S-adenosyl-L-methionine. Residues 94–314 (EGFEMVNFKE…AGDQIYIFYG (221 aa)) form the SET domain. The tract at residues 551-596 (GLVNGESLIPNGTRSENESLSPEESENTTGDTEESSGSMDAVKERL) is disordered. Positions 571–584 (SPEESENTTGDTEE) are enriched in acidic residues.

It belongs to the class V-like SAM-binding methyltransferase superfamily. SETD3 actin-histidine methyltransferase family. In terms of assembly, interacts with MYOD1. In terms of processing, phosphorylated by GSK3B, which is required for recognition by the SCF(FBXW7) complex and subsequent degradation. Post-translationally, ubiquitinated by the SCF(FBXW7) complex following phosphorylation by GSK3B, leading to its degradation by the proteasome.

The protein resides in the cytoplasm. Its subcellular location is the nucleus. It carries out the reaction L-histidyl-[protein] + S-adenosyl-L-methionine = N(tele)-methyl-L-histidyl-[protein] + S-adenosyl-L-homocysteine + H(+). Protein-histidine N-methyltransferase that specifically mediates 3-methylhistidine (tele-methylhistidine) methylation of actin at 'His-73'. Histidine methylation of actin is required for smooth muscle contraction of the laboring uterus during delivery. Does not have protein-lysine N-methyltransferase activity and probably only catalyzes histidine methylation of actin. This is Actin-histidine N-methyltransferase from Rattus norvegicus (Rat).